The sequence spans 95 residues: Putative pterin-4-alpha-carbinolamine dehydratase (95 aa).

It belongs to the pterin-4-alpha-carbinolamine dehydratase family.

The enzyme catalyses (4aS,6R)-4a-hydroxy-L-erythro-5,6,7,8-tetrahydrobiopterin = (6R)-L-erythro-6,7-dihydrobiopterin + H2O. The sequence is that of Putative pterin-4-alpha-carbinolamine dehydratase from Solibacter usitatus (strain Ellin6076).